The chain runs to 569 residues: Acyl-CoA-binding domain-containing protein 5 (569 aa).

The first 31 residues, 1-31 (MELFYELLLTAAASLLVAFLLARLLASAATA), serve as a signal peptide directing secretion. Residues 415–506 (IEKRFGVAAA…LSEAIPGWMG (92 aa)) enclose the ACB domain. Positions 474 and 493 each coordinate an acyl-CoA. N-linked (GlcNAc...) asparagine glycosylation is present at Asn508. Composition is skewed to polar residues over residues 533-544 (INQHDSQGNEDN) and 552-569 (LTSS…IPAE). The disordered stretch occupies residues 533–569 (INQHDSQGNEDNTGMYEGHLTSSPNPEKGQSSDIPAE).

This sequence belongs to the ACBP family. As to expression, highly expressed in seeds and leaves. Expressed at low levels in roots.

The protein localises to the endoplasmic reticulum. Functionally, binds medium- and long-chain acyl-CoA esters with high affinity. Can interact in vitro with palmitoyl-CoA and linolenoyl-CoA. Binds phosphatidic acid (PA) and phosphatidylcholine (PC) in vitro. May play a role in the biosynthesis of phospholipids. This is Acyl-CoA-binding domain-containing protein 5 from Oryza sativa subsp. japonica (Rice).